A 190-amino-acid chain; its full sequence is Threonylcarbamoyl-AMP synthase (190 aa).

The YrdC-like domain maps to 7 to 190 (GDAIAAAIDV…ALTGELFRQG (184 aa)).

This sequence belongs to the SUA5 family. TsaC subfamily.

The protein resides in the cytoplasm. The catalysed reaction is L-threonine + hydrogencarbonate + ATP = L-threonylcarbamoyladenylate + diphosphate + H2O. In terms of biological role, required for the formation of a threonylcarbamoyl group on adenosine at position 37 (t(6)A37) in tRNAs that read codons beginning with adenine. Catalyzes the conversion of L-threonine, HCO(3)(-)/CO(2) and ATP to give threonylcarbamoyl-AMP (TC-AMP) as the acyladenylate intermediate, with the release of diphosphate. This is Threonylcarbamoyl-AMP synthase from Escherichia coli O1:K1 / APEC.